The sequence spans 132 residues: Small ribosomal subunit protein uS8 (132 aa).

This sequence belongs to the universal ribosomal protein uS8 family. In terms of assembly, part of the 30S ribosomal subunit. Contacts proteins S5 and S12.

Functionally, one of the primary rRNA binding proteins, it binds directly to 16S rRNA central domain where it helps coordinate assembly of the platform of the 30S subunit. In Desulfitobacterium hafniense (strain DSM 10664 / DCB-2), this protein is Small ribosomal subunit protein uS8.